The primary structure comprises 291 residues: Lipoyl synthase (291 aa).

[4Fe-4S] cluster-binding residues include Cys-36, Cys-41, Cys-47, Cys-62, Cys-66, Cys-69, and Ser-275. The Radical SAM core domain maps to 48-264 (FSKKTATFLI…KEFAISIGFK (217 aa)).

Belongs to the radical SAM superfamily. Lipoyl synthase family. [4Fe-4S] cluster serves as cofactor.

Its subcellular location is the cytoplasm. It carries out the reaction [[Fe-S] cluster scaffold protein carrying a second [4Fe-4S](2+) cluster] + N(6)-octanoyl-L-lysyl-[protein] + 2 oxidized [2Fe-2S]-[ferredoxin] + 2 S-adenosyl-L-methionine + 4 H(+) = [[Fe-S] cluster scaffold protein] + N(6)-[(R)-dihydrolipoyl]-L-lysyl-[protein] + 4 Fe(3+) + 2 hydrogen sulfide + 2 5'-deoxyadenosine + 2 L-methionine + 2 reduced [2Fe-2S]-[ferredoxin]. Its pathway is protein modification; protein lipoylation via endogenous pathway; protein N(6)-(lipoyl)lysine from octanoyl-[acyl-carrier-protein]: step 2/2. In terms of biological role, catalyzes the radical-mediated insertion of two sulfur atoms into the C-6 and C-8 positions of the octanoyl moiety bound to the lipoyl domains of lipoate-dependent enzymes, thereby converting the octanoylated domains into lipoylated derivatives. The polypeptide is Lipoyl synthase (Caldicellulosiruptor bescii (strain ATCC BAA-1888 / DSM 6725 / KCTC 15123 / Z-1320) (Anaerocellum thermophilum)).